The chain runs to 179 residues: Large ribosomal subunit protein uL5 (179 aa).

Belongs to the universal ribosomal protein uL5 family. In terms of assembly, part of the 50S ribosomal subunit; part of the 5S rRNA/L5/L18/L25 subcomplex. Contacts the 5S rRNA and the P site tRNA. Forms a bridge to the 30S subunit in the 70S ribosome.

This is one of the proteins that bind and probably mediate the attachment of the 5S RNA into the large ribosomal subunit, where it forms part of the central protuberance. In the 70S ribosome it contacts protein S13 of the 30S subunit (bridge B1b), connecting the 2 subunits; this bridge is implicated in subunit movement. Contacts the P site tRNA; the 5S rRNA and some of its associated proteins might help stabilize positioning of ribosome-bound tRNAs. This Lawsonia intracellularis (strain PHE/MN1-00) protein is Large ribosomal subunit protein uL5.